The following is a 108-amino-acid chain: ATP-dependent Clp protease adapter protein ClpS (108 aa).

This sequence belongs to the ClpS family. In terms of assembly, binds to the N-terminal domain of the chaperone ClpA.

Functionally, involved in the modulation of the specificity of the ClpAP-mediated ATP-dependent protein degradation. The chain is ATP-dependent Clp protease adapter protein ClpS from Ralstonia pickettii (strain 12J).